The chain runs to 566 residues: Beta-1,4 N-acetylgalactosaminyltransferase 2 (566 aa).

Positions 1 to 22 (MGSAGFSVGKFHVEVASRGREC) are ER exit and post-Golgi subcellular localization. Residues 1–67 (MGSAGFSVGK…HGRSRRQGSR (67 aa)) are Cytoplasmic-facing. Positions 9–15 (GKFHVEV) match the Vesicular targeting motif. A helical; Signal-anchor for type II membrane protein membrane pass occupies residues 68–88 (FLWLLKILVIILVLGIVGFMF). The Lumenal segment spans residues 89–566 (GSMFLQAVFS…YFKNHLQCAA (478 aa)).

It belongs to the glycosyltransferase 2 family. Homodimer; disulfide-linked. As to expression, widely expressed. Highly expressed in colon and to a lesser extent in kidney, stomach, ileum and rectum.

The protein resides in the golgi apparatus. It is found in the trans-Golgi network membrane. Its subcellular location is the cytoplasmic vesicle membrane. It carries out the reaction an N-acetyl-alpha-neuraminyl-(2-&gt;3)-beta-D-galactosyl derivative + UDP-N-acetyl-alpha-D-galactosamine = an N-acetyl-beta-D-galactosaminyl-(1-&gt;4)-[N-acetyl-alpha-neuraminyl-(2-&gt;3)]-beta-D-galactosyl derivative + UDP + H(+). It catalyses the reaction a 3-O-{alpha-Neu5Ac-(2-&gt;3)-beta-D-Gal-(1-&gt;3)-[alpha-Neu5Ac-(2-&gt;6)]-alpha-D-GalNAc}-L-seryl-[protein] + UDP-N-acetyl-alpha-D-galactosamine = a 3-O-{[alpha-Neu5Ac-(2-&gt;3)]-beta-D-GalNAc-(1-&gt;4)-beta-D-Gal-(1-&gt;3)-[alpha-Neu5Ac-(2-&gt;6)]-alpha-D-GalNAc}-L-seryl-[protein] + UDP + H(+). The catalysed reaction is a 3-O-{alpha-Neu5Ac-(2-&gt;3)-beta-D-Gal-(1-&gt;3)-[alpha-Neu5Ac-(2-&gt;6)]-alpha-D-GalNAc}-L-threonyl-[protein] + UDP-N-acetyl-alpha-D-galactosamine = a 3-O-{[alpha-Neu5Ac-(2-&gt;3)]-beta-D-GalNAc-(1-&gt;4)-beta-D-Gal-(1-&gt;3)-[alpha-Neu5Ac-(2-&gt;6)]-alpha-D-GalNAc}-L-threonyl-[protein] + UDP + H(+). The enzyme catalyses a neolactoside IV(3)-alpha-NeuAc-nLc4Cer + UDP-N-acetyl-alpha-D-galactosamine = a neolactoside IV(4)-GalNAc,IV(3)-alpha-NeuAc-nLc4Cer + UDP + H(+). Its pathway is protein modification; protein glycosylation. The protein operates within glycolipid biosynthesis. Functionally, beta-1,4 N-acetylgalactosaminyltransferase involved in the biosynthesis of Sd(a) histo-blood group antigen. Catalyzes the transfer of N-acetylgalactosamine (GalNAc) group in a beta-1,4-linkage from UDP-GalNAc to the galactose residue of NeuAcalpha2-&gt;3Gal-R to form Sd(a) glycan epitope GalNAcbeta1-&gt;4(NeuAcalpha2-&gt;3)Gal-R. The Sd(a) epitope is carried in O- and N-linked glycoproteins and glycolipids, including O-linked core 1 structures on GYPA/glycophorin, SLC4A1 and SLC29A1 in erythrocytes, N-linked glycans attached to the Tamm-Horsfall glycoprotein UMOD/uromodulin in renal fluids, O-linked core 3 glycans on mucins in colon and neolactosides in gastric mucosa. Confers protection against influenza A virus strains that attach to NeuAcalpha2-&gt;3-carrying host receptors. Modifies N-glycan chains on host receptors and prevents virus entry into cells. The sequence is that of Beta-1,4 N-acetylgalactosaminyltransferase 2 from Homo sapiens (Human).